A 515-amino-acid chain; its full sequence is NADH-ubiquinone oxidoreductase chain 2 (515 aa).

Transmembrane regions (helical) follow at residues 63 to 83 (WPIGIAAFGLCLLFLIKNSGS), 250 to 270 (VFIYGSYGATLQQIFFFCSIA), 299 to 319 (FVLVLMWNREGIQSLLIGLFI), 356 to 376 (AITFSITMFSYAGIPPLAGFC), and 379 to 399 (FYLFFAALGCGAYFLAPVGVV).

Belongs to the complex I subunit 2 family.

It localises to the mitochondrion inner membrane. The enzyme catalyses a ubiquinone + NADH + 5 H(+)(in) = a ubiquinol + NAD(+) + 4 H(+)(out). In terms of biological role, core subunit of the mitochondrial membrane respiratory chain NADH dehydrogenase (Complex I) that is believed to belong to the minimal assembly required for catalysis. Complex I functions in the transfer of electrons from NADH to the respiratory chain. The immediate electron acceptor for the enzyme is believed to be ubiquinone. This is NADH-ubiquinone oxidoreductase chain 2 (ND2) from Beta vulgaris (Sugar beet).